Consider the following 511-residue polypeptide: Spermatogenesis-associated protein 2 (511 aa).

Residues 77 to 149 form the PUB domain; that stretch reads ALHCAFSMLE…AYKLKELVES (73 aa). The PIM motif motif lies at 320-337; it reads TYFPTQDDVDLYTDSEPR.

The protein belongs to the SPATA2 family. Interacts (via the PIM motif) with RNF31/HOIP (via the PUB domain); the interaction is direct. Interacts (via the PUB domain) with CYLD; the interaction is direct. As to expression, expressed in the testis and to a lesser extent in the brain, while skeletal muscle and kidney show weak expression.

The protein resides in the cytoplasm. It localises to the nucleus. Functionally, bridging factor that mediates the recruitment of CYLD to the LUBAC complex, thereby regulating TNF-alpha-induced necroptosis. Acts as a direct binding intermediate that bridges RNF31/HOIP, the catalytic subunit of the LUBAC complex, and the deubiquitinase (CYLD), thereby recruiting CYLD to the TNF-R1 signaling complex (TNF-RSC). Required to activate the 'Met-1'- (linear) and 'Lys-63'-linked deubiquitinase activities of CYLD. Controls the kinase activity of RIPK1 and TNF-alpha-induced necroptosis by promoting 'Met-1'-linked deubiquitination of RIPK1 by CYLD. This chain is Spermatogenesis-associated protein 2, found in Rattus norvegicus (Rat).